The following is a 540-amino-acid chain: Phosphoenolpyruvate carboxykinase (ATP) (540 aa).

R65 is a substrate binding site. Position 87 is an N6-acetyllysine (K87). Positions 207 and 213 each coordinate substrate. Residues K213, H232, and 248-256 each bind ATP; that span reads GLSGTGKTT. 2 residues coordinate Mn(2+): K213 and H232. D269 is a Mn(2+) binding site. Residues E297, R333, 449-450, and T455 contribute to the ATP site; that span reads RI. R333 lines the substrate pocket. N6-acetyllysine is present on K523.

The protein belongs to the phosphoenolpyruvate carboxykinase (ATP) family. Monomer. Mn(2+) is required as a cofactor.

It localises to the cytoplasm. The enzyme catalyses oxaloacetate + ATP = phosphoenolpyruvate + ADP + CO2. It participates in carbohydrate biosynthesis; gluconeogenesis. Functionally, involved in the gluconeogenesis. Catalyzes the conversion of oxaloacetate (OAA) to phosphoenolpyruvate (PEP) through direct phosphoryl transfer between the nucleoside triphosphate and OAA. This Escherichia fergusonii (strain ATCC 35469 / DSM 13698 / CCUG 18766 / IAM 14443 / JCM 21226 / LMG 7866 / NBRC 102419 / NCTC 12128 / CDC 0568-73) protein is Phosphoenolpyruvate carboxykinase (ATP).